The sequence spans 272 residues: 3-methyl-2-oxobutanoate hydroxymethyltransferase (272 aa).

Positions 52 and 91 each coordinate Mg(2+). 3-methyl-2-oxobutanoate-binding positions include Asp52–Ser53, Asp91, and Lys121. Mg(2+) is bound at residue Glu123. Glu190 acts as the Proton acceptor in catalysis.

It belongs to the PanB family. In terms of assembly, homodecamer; pentamer of dimers. The cofactor is Mg(2+).

It is found in the cytoplasm. It catalyses the reaction 3-methyl-2-oxobutanoate + (6R)-5,10-methylene-5,6,7,8-tetrahydrofolate + H2O = 2-dehydropantoate + (6S)-5,6,7,8-tetrahydrofolate. It participates in cofactor biosynthesis; (R)-pantothenate biosynthesis; (R)-pantoate from 3-methyl-2-oxobutanoate: step 1/2. Functionally, catalyzes the reversible reaction in which hydroxymethyl group from 5,10-methylenetetrahydrofolate is transferred onto alpha-ketoisovalerate to form ketopantoate. In Christiangramia forsetii (strain DSM 17595 / CGMCC 1.15422 / KT0803) (Gramella forsetii), this protein is 3-methyl-2-oxobutanoate hydroxymethyltransferase.